Here is a 583-residue protein sequence, read N- to C-terminus: Isocitrate dehydrogenase kinase/phosphatase (583 aa).

ATP contacts are provided by residues 315-321 and K336; that span reads APGIRGM. D371 is an active-site residue.

The protein belongs to the AceK family.

It is found in the cytoplasm. The catalysed reaction is L-seryl-[isocitrate dehydrogenase] + ATP = O-phospho-L-seryl-[isocitrate dehydrogenase] + ADP + H(+). Bifunctional enzyme which can phosphorylate or dephosphorylate isocitrate dehydrogenase (IDH) on a specific serine residue. This is a regulatory mechanism which enables bacteria to bypass the Krebs cycle via the glyoxylate shunt in response to the source of carbon. When bacteria are grown on glucose, IDH is fully active and unphosphorylated, but when grown on acetate or ethanol, the activity of IDH declines drastically concomitant with its phosphorylation. This is Isocitrate dehydrogenase kinase/phosphatase from Salmonella paratyphi C (strain RKS4594).